Reading from the N-terminus, the 349-residue chain is KH domain-containing, RNA-binding, signal transduction-associated protein 2 (349 aa).

The region spanning 65-135 (LIPVKQYPKF…HLSDELHVLI (71 aa)) is the KH domain. Disordered stretches follow at residues 182 to 284 (EDSG…DDQT) and 319 to 349 (PEEW…YGRY). Omega-N-methylarginine occurs at positions 230 and 240. Basic and acidic residues predominate over residues 340-349 (GYREHPYGRY).

The protein belongs to the KHDRBS family. Self-associates to form homooligomers. Interacts with KHDRBS1/SAM68; heterooligomer formation of KHDRBS family proteins may modulate RNA substrate specificity. Interacts with RBMX. Interacts with SAFB, SFRS9 and YTHDC1. Interacts with FYN and PLCG1 (via SH3 domain). Interacts (phosphorylated) with FYN, GRB2, PLCG1 and RASA1 (via SH2 domain). In terms of processing, methylated. Tyrosine phosphorylated by FYN, PTK6 and SRC. Tyrosine phosphorylated by SRC during mitosis. As to expression, highly expressed in brain, lung, kidney and small intestine. Weakly expressed in placenta, liver, spleen, thymus, ovary and colon.

It is found in the nucleus. RNA-binding protein that plays a role in the regulation of alternative splicing and influences mRNA splice site selection and exon inclusion. Binds both poly(A) and poly(U) homopolymers. Phosphorylation by PTK6 inhibits its RNA-binding ability. Induces an increased concentration-dependent incorporation of exon in CD44 pre-mRNA by direct binding to purine-rich exonic enhancer. Can regulate alternative splicing of NRXN1 in the laminin G-like domain 6 containing the evolutionary conserved neurexin alternative spliced segment 4 (AS4) involved in neurexin selective targeting to postsynaptic partners. Regulates cell-type specific alternative splicing of NRXN1 at AS4 and acts synergystically with SAM68 in exon skipping. In contrast acts antagonistically with SAM68 in NRXN3 exon skipping at AS4. Its phosphorylation by FYN inhibits its ability to regulate splice site selection. May function as an adapter protein for Src kinases during mitosis. The sequence is that of KH domain-containing, RNA-binding, signal transduction-associated protein 2 (KHDRBS2) from Homo sapiens (Human).